Consider the following 209-residue polypeptide: Glycerol-3-phosphate acyltransferase (209 aa).

The next 5 helical transmembrane spans lie at 5 to 25, 50 to 70, 74 to 94, 115 to 135, and 151 to 171; these read IIGM…LWIG, LGFK…TLAA, YFLG…ASLG, ILLA…IFVL, and AIFI…AGIL.

The protein belongs to the PlsY family. In terms of assembly, probably interacts with PlsX.

The protein localises to the cell membrane. It catalyses the reaction an acyl phosphate + sn-glycerol 3-phosphate = a 1-acyl-sn-glycero-3-phosphate + phosphate. The protein operates within lipid metabolism; phospholipid metabolism. Its function is as follows. Catalyzes the transfer of an acyl group from acyl-phosphate (acyl-PO(4)) to glycerol-3-phosphate (G3P) to form lysophosphatidic acid (LPA). This enzyme utilizes acyl-phosphate as fatty acyl donor, but not acyl-CoA or acyl-ACP. The sequence is that of Glycerol-3-phosphate acyltransferase from Limosilactobacillus reuteri (strain DSM 20016) (Lactobacillus reuteri).